We begin with the raw amino-acid sequence, 907 residues long: Epidermal growth factor receptor substrate 15-like 1 (907 aa).

Alanine 2 bears the N-acetylalanine mark. The 90-residue stretch at 15–104 (GNPLYESYYK…SLTMPPPKFH (90 aa)) folds into the EH 1 domain. Residues 15-368 (GNPLYESYYK…PSERGTPIPD (354 aa)) are interaction with DAB2. Residues 48–83 (LSDIILGKIWDLADPEGKGFLDKQGFYVALRLVACA) form the EF-hand 1 domain. A Phosphotyrosine modification is found at tyrosine 74. Phosphoserine is present on residues serine 107 and serine 108. Residues 127 to 215 (EKAKFDGIFE…PPLIPPSKRK (89 aa)) enclose the EH 2 domain. One can recognise an EF-hand 2 domain in the interval 159 to 194 (LPLDVLGRVWDLSDIDKDGHLDRDEFAVAMHLVYRA). Ca(2+) contacts are provided by aspartate 172, aspartate 174, aspartate 176, histidine 178, and glutamate 183. Residues serine 229, serine 244, serine 253, serine 255, and serine 259 each carry the phosphoserine modification. Residues 229 to 260 (SPPPKDSLRSTPSHGSVSSLNSTGSLSPKHSV) are disordered. A compositionally biased stretch (low complexity) spans 241-255 (SHGSVSSLNSTGSLS). EF-hand domains lie at 272–307 (ADKM…SGLT) and 308–341 (QNLL…IQQK). The 91-residue stretch at 273–363 (DKMRFDEIFL…PDMVPPSERG (91 aa)) folds into the EH 3 domain. Serine 360 carries the post-translational modification Phosphoserine. Threonine 364 is subject to Phosphothreonine. A phosphoserine mark is found at serine 369 and serine 375. The stretch at 384-551 (LDDISQEIAQ…RSKLSQLQES (168 aa)) forms a coiled coil. Serine 558 is modified (phosphoserine). A Phosphotyrosine modification is found at tyrosine 562. Serine 610 is modified (phosphoserine). Residues 611–860 (QELHPDPFQA…SSSGFADFTS (250 aa)) form a disordered region. The segment covering 622 to 636 (DPFKSDPFKGADPFK) has biased composition (basic and acidic residues). Residues 643 to 652 (DPFSEQQTAA) are compositionally biased toward polar residues. Phosphoserine occurs at positions 664, 670, 695, 715, and 732. The segment covering 682–696 (NDPFTSDPFTKNPSL) has biased composition (polar residues). Positions 703 to 743 (FESSDPFSSSSISSKGSDPFGTLDPFGSSSFSSAEGFADFS) are enriched in low complexity. Pro residues predominate over residues 776-790 (ALPPKKPAPPRPKPP). Serine 791 is modified (phosphoserine). The span at 791–802 (SGQSTPVSQLGS) shows a compositional bias: polar residues. Threonine 795 is modified (phosphothreonine). The segment covering 840–853 (APSSSAKPPKTSSS) has biased composition (low complexity). UIM domains follow at residues 863 to 882 (NEEQ…EQER) and 889 to 907 (QEQE…DMPA).

In terms of assembly, interacts with EPS15, AGFG1/HRB and AGFG2/HRBL. Associates with the clathrin-associated adapter protein complex 2 (AP-2). Interacts with FCHO1. Interacts with FCHO2. Interacts (via EH domains) with DAB2. Interacts with UBQLN1 (via ubiquitin-like domain). Interacts with CAVIN3 (via leucine-zipper domain). Interacts with REPS2. Phosphorylated on tyrosine residues by EGFR.

It localises to the cell membrane. The protein resides in the nucleus. Its subcellular location is the membrane. The protein localises to the coated pit. Its function is as follows. Seems to be a constitutive component of clathrin-coated pits that is required for receptor-mediated endocytosis. Involved in endocytosis of integrin beta-1 (ITGB1) and transferrin receptor (TFR); internalization of ITGB1 as DAB2-dependent cargo but not TFR seems to require association with DAB2. This is Epidermal growth factor receptor substrate 15-like 1 (Eps15l1) from Mus musculus (Mouse).